The primary structure comprises 358 residues: MKHVDTEIPTEEQIHEAEKFGFHGQVQAAKIRFDRYFPGVLASITVAAAATFLSDHYGAPTMLFALLIGMAFRFLSEDESRALVGIQFASTTVLRIGVALLGMRITLGQIQSLGVKPVVMVFFSVLLTILFGLALSKMMGRGKRFGVLTGGSVGICGASAALAIAAVLPQDEYSERNTIFTVISITALSTLAMIAYPVVAQWFGLDHQAAGIFLGGTIHDVAQVVGAGYSVSEQTGDTATVIKLLRVSMLVPVVFILSLIFHKRNQKDGNAPRRTLLPPFIIFFVLFVGINSLGVVPKPATQFINDVSRWCLVTAIGALGMKTSLKSLFEVGWKPVSIMIAETVFLAVLVLGSVVWMS.

The next 10 helical transmembrane spans lie at 36–53, 57–76, 83–105, 115–134, 146–168, 178–200, 244–261, 276–295, 307–325, and 335–357; these read YFPG…ATFL, YGAP…RFLS, LVGI…GMRI, VKPV…FGLA, GVLT…AAVL, TIFT…PVVA, LLRV…SLIF, LLPP…SLGV, VSRW…KTSL, and PVSI…VVWM.

The protein belongs to the UPF0324 family.

The protein localises to the cell membrane. The polypeptide is UPF0324 membrane protein CT0845 (Chlorobaculum tepidum (strain ATCC 49652 / DSM 12025 / NBRC 103806 / TLS) (Chlorobium tepidum)).